Reading from the N-terminus, the 518-residue chain is Integrator complex subunit 14 (518 aa).

The VWFA domain maps to 2–204 (PTVVVMDVSL…KNVQSMFGKL (203 aa)). Mg(2+)-binding residues include Ser-10, Ser-12, and Thr-86. Position 418 is an N6-acetyllysine (Lys-418).

The protein belongs to the Integrator subunit 14 family. As to quaternary structure, component of the Integrator complex, composed of core subunits INTS1, INTS2, INTS3, INTS4, INTS5, INTS6, INTS7, INTS8, INTS9/RC74, INTS10, INTS11/CPSF3L, INTS12, INTS13, INTS14 and INTS15. The core complex associates with protein phosphatase 2A subunits PPP2CA and PPP2R1A, to form the Integrator-PP2A (INTAC) complex. INTS14 is part of the tail subcomplex, composed of INTS10, INTS13, INTS14 and INTS15. In terms of tissue distribution, strongly expressed in numerous cancer cells compared with their non-cancerous counterparts (lung, prostate, colon, stomach and skin).

It is found in the nucleus. Its function is as follows. Component of the integrator complex, a multiprotein complex that terminates RNA polymerase II (Pol II) transcription in the promoter-proximal region of genes. The integrator complex provides a quality checkpoint during transcription elongation by driving premature transcription termination of transcripts that are unfavorably configured for transcriptional elongation: the complex terminates transcription by (1) catalyzing dephosphorylation of the C-terminal domain (CTD) of Pol II subunit POLR2A/RPB1 and SUPT5H/SPT5, (2) degrading the exiting nascent RNA transcript via endonuclease activity and (3) promoting the release of Pol II from bound DNA. The integrator complex is also involved in terminating the synthesis of non-coding Pol II transcripts, such as enhancer RNAs (eRNAs), small nuclear RNAs (snRNAs), telomerase RNAs and long non-coding RNAs (lncRNAs). Within the integrator complex, INTS14 is part of the integrator tail module that acts as a platform for the recruitment of transcription factors at promoters. This Homo sapiens (Human) protein is Integrator complex subunit 14.